Reading from the N-terminus, the 202-residue chain is Ras-related protein Rab-2B (202 aa).

31–38 (GDSAVGKS) is a GTP binding site. The Effector region signature appears at 53–61 (SDFTIGVEF). GTP contacts are provided by residues 79–83 (DTAGQ) and 137–140 (NKAD).

The protein belongs to the small GTPase superfamily. Rab family. In terms of processing, this sequence lacks the C-terminal cysteine motifs subject to isoprenylation in other Rab proteins.

The polypeptide is Ras-related protein Rab-2B (rab2B) (Dictyostelium discoideum (Social amoeba)).